A 393-amino-acid polypeptide reads, in one-letter code: Formate-dependent phosphoribosylglycinamide formyltransferase (393 aa).

Residues 22–23 (EL) and Glu-82 contribute to the N(1)-(5-phospho-beta-D-ribosyl)glycinamide site. ATP-binding positions include Arg-114, Lys-155, 160-165 (SSGHGQ), 195-198 (EGFI), and Glu-203. The ATP-grasp domain occupies 119-308 (RLAAEELGLK…QFALHARAIL (190 aa)). Glu-267 and Glu-279 together coordinate Mg(2+). Residues Asp-286, Lys-356, and 363-364 (RR) each bind N(1)-(5-phospho-beta-D-ribosyl)glycinamide.

It belongs to the PurK/PurT family. In terms of assembly, homodimer.

It catalyses the reaction N(1)-(5-phospho-beta-D-ribosyl)glycinamide + formate + ATP = N(2)-formyl-N(1)-(5-phospho-beta-D-ribosyl)glycinamide + ADP + phosphate + H(+). It participates in purine metabolism; IMP biosynthesis via de novo pathway; N(2)-formyl-N(1)-(5-phospho-D-ribosyl)glycinamide from N(1)-(5-phospho-D-ribosyl)glycinamide (formate route): step 1/1. In terms of biological role, involved in the de novo purine biosynthesis. Catalyzes the transfer of formate to 5-phospho-ribosyl-glycinamide (GAR), producing 5-phospho-ribosyl-N-formylglycinamide (FGAR). Formate is provided by PurU via hydrolysis of 10-formyl-tetrahydrofolate. The polypeptide is Formate-dependent phosphoribosylglycinamide formyltransferase (Actinobacillus pleuropneumoniae serotype 3 (strain JL03)).